A 435-amino-acid polypeptide reads, in one-letter code: Bifunctional protein GlmU (435 aa).

Residues 1–224 (MNDTSIIILA…EQNFMGINDK (224 aa)) are pyrophosphorylase. UDP-N-acetyl-alpha-D-glucosamine contacts are provided by residues 9–12 (LAAG), lysine 23, glutamine 75, and 82–83 (GT). Mg(2+) is bound at residue aspartate 103. 4 residues coordinate UDP-N-acetyl-alpha-D-glucosamine: glycine 136, glutamate 150, asparagine 165, and asparagine 222. Asparagine 222 is a binding site for Mg(2+). A linker region spans residues 225–245 (FQLSVAEKIMQDEIKQDLMKA). The segment at 246–435 (GVLMRLPESI…KFFGKNNAEK (190 aa)) is N-acetyltransferase. The UDP-N-acetyl-alpha-D-glucosamine site is built by arginine 309 and lysine 326. Histidine 337 serves as the catalytic Proton acceptor. 2 residues coordinate UDP-N-acetyl-alpha-D-glucosamine: tyrosine 340 and asparagine 351. Acetyl-CoA is bound by residues 360 to 361 (NY), serine 379, alanine 397, and arginine 414.

In the N-terminal section; belongs to the N-acetylglucosamine-1-phosphate uridyltransferase family. It in the C-terminal section; belongs to the transferase hexapeptide repeat family. As to quaternary structure, homotrimer. Mg(2+) is required as a cofactor.

Its subcellular location is the cytoplasm. The enzyme catalyses alpha-D-glucosamine 1-phosphate + acetyl-CoA = N-acetyl-alpha-D-glucosamine 1-phosphate + CoA + H(+). It carries out the reaction N-acetyl-alpha-D-glucosamine 1-phosphate + UTP + H(+) = UDP-N-acetyl-alpha-D-glucosamine + diphosphate. It functions in the pathway nucleotide-sugar biosynthesis; UDP-N-acetyl-alpha-D-glucosamine biosynthesis; N-acetyl-alpha-D-glucosamine 1-phosphate from alpha-D-glucosamine 6-phosphate (route II): step 2/2. It participates in nucleotide-sugar biosynthesis; UDP-N-acetyl-alpha-D-glucosamine biosynthesis; UDP-N-acetyl-alpha-D-glucosamine from N-acetyl-alpha-D-glucosamine 1-phosphate: step 1/1. Its pathway is bacterial outer membrane biogenesis; LPS lipid A biosynthesis. Functionally, catalyzes the last two sequential reactions in the de novo biosynthetic pathway for UDP-N-acetylglucosamine (UDP-GlcNAc). The C-terminal domain catalyzes the transfer of acetyl group from acetyl coenzyme A to glucosamine-1-phosphate (GlcN-1-P) to produce N-acetylglucosamine-1-phosphate (GlcNAc-1-P), which is converted into UDP-GlcNAc by the transfer of uridine 5-monophosphate (from uridine 5-triphosphate), a reaction catalyzed by the N-terminal domain. The sequence is that of Bifunctional protein GlmU from Campylobacter curvus (strain 525.92).